The chain runs to 574 residues: Avenacosidase 1 (574 aa).

The transit peptide at 1-55 directs the protein to the chloroplast; sequence MALLCSALSNSTHPSFRSHIGANSENLWHLSADPAQKSKRRCNLTLSSRAARISS. Residues Q88, H192, and 237-238 contribute to the a beta-D-glucoside site; that span reads NE. The Proton donor role is filled by E238. The cysteines at positions 258 and 264 are disulfide-linked. A beta-D-glucoside contacts are provided by residues Y381, E454, W505, 512-513, and F521; that span reads EW. E454 (nucleophile) is an active-site residue.

The protein belongs to the glycosyl hydrolase 1 family. In terms of assembly, homo- and heteromultimer with P60B in a 1:1 stoichiometry. Aggregates to form the fibrillar stromacentre. Expressed in caryopses, coleoptiles, primary leaves, and etiolated and green seedlings, but not in roots.

It localises to the plastid. The protein resides in the chloroplast stroma. It catalyses the reaction avenacoside B + H2O = 26-desgluco-avenacoside B + D-glucose. With respect to regulation, inhibited by N-(3-Dimethylaminopropyl)-N'-ethylcarbodiimide hydrochloride (EDC). Beta-glucosidase acting as a preformed defense system. Hydrolyzes the bisdesmosides avenacosides A and B to 26-desgluco-avenacosides exhibiting fungicidal activity. Can use beta-fucoside &gt; beta-glucoside &gt; beta-galactoside &gt; beta-xyloside as substrates, but not alpha-glycosides, beta-thioglucosides and disaccharides. The chain is Avenacosidase 1 (P60A) from Avena sativa (Oat).